Consider the following 309-residue polypeptide: UDP-N-acetylenolpyruvoylglucosamine reductase (309 aa).

An FAD-binding PCMH-type domain is found at 40 to 204 (LGGKVPLFAI…LQATFKLKKG (165 aa)). Residue R182 is part of the active site. Catalysis depends on S233, which acts as the Proton donor. Residue E304 is part of the active site.

This sequence belongs to the MurB family. FAD is required as a cofactor.

The protein resides in the cytoplasm. It carries out the reaction UDP-N-acetyl-alpha-D-muramate + NADP(+) = UDP-N-acetyl-3-O-(1-carboxyvinyl)-alpha-D-glucosamine + NADPH + H(+). It participates in cell wall biogenesis; peptidoglycan biosynthesis. Functionally, cell wall formation. This chain is UDP-N-acetylenolpyruvoylglucosamine reductase, found in Fervidobacterium nodosum (strain ATCC 35602 / DSM 5306 / Rt17-B1).